The primary structure comprises 395 residues: S-adenosylmethionine synthase (395 aa).

H16 is an ATP binding site. Position 18 (D18) interacts with Mg(2+). A K(+)-binding site is contributed by E44. L-methionine contacts are provided by E57 and Q100. The flexible loop stretch occupies residues 100–110 (QSPDIAQGVDR). ATP is bound by residues 167-169 (DAK), 233-234 (RF), D242, 248-249 (RK), A265, and K269. L-methionine is bound at residue D242. K273 contacts L-methionine.

This sequence belongs to the AdoMet synthase family. As to quaternary structure, homotetramer; dimer of dimers. The cofactor is Mg(2+). K(+) serves as cofactor.

The protein resides in the cytoplasm. It carries out the reaction L-methionine + ATP + H2O = S-adenosyl-L-methionine + phosphate + diphosphate. It participates in amino-acid biosynthesis; S-adenosyl-L-methionine biosynthesis; S-adenosyl-L-methionine from L-methionine: step 1/1. Catalyzes the formation of S-adenosylmethionine (AdoMet) from methionine and ATP. The overall synthetic reaction is composed of two sequential steps, AdoMet formation and the subsequent tripolyphosphate hydrolysis which occurs prior to release of AdoMet from the enzyme. This is S-adenosylmethionine synthase from Burkholderia ambifaria (strain MC40-6).